We begin with the raw amino-acid sequence, 138 residues long: Basic phospholipase A2 ammodytoxin B (138 aa).

An N-terminal signal peptide occupies residues 1–16; sequence MRTLWIVAVCLIGVEG. Cystine bridges form between Cys42-Cys131, Cys44-Cys60, Cys59-Cys111, Cys65-Cys138, Cys66-Cys104, Cys73-Cys97, and Cys91-Cys102. Tyr43, Gly45, and Gly47 together coordinate Ca(2+). Residue His63 is part of the active site. A Ca(2+)-binding site is contributed by Asp64. Residue Asp105 is part of the active site.

It belongs to the phospholipase A2 family. Group II subfamily. D49 sub-subfamily. As to quaternary structure, monomer. Binds to calmodulin, coagulation factor X (F10), M-type PLA2 receptor (R-180), 14-3-3 proteins gamma (YWHAG) and epsilon (YWHAE), and R25, a mitochondrial membrane protein. It depends on Ca(2+) as a cofactor. As to expression, expressed by the venom gland.

The protein resides in the secreted. It localises to the host cytoplasm. Its subcellular location is the host cytosol. The enzyme catalyses a 1,2-diacyl-sn-glycero-3-phosphocholine + H2O = a 1-acyl-sn-glycero-3-phosphocholine + a fatty acid + H(+). Snake venom phospholipase A2 (PLA2) that acts as a presynaptic neurotoxin, an inhibitor of blood coagulation, and has been found to bind with high affinity to intracellular proteins. The response of indirectly stimulated neuromuscular preparations to ammodytoxin (Atx) is triphasic. The first phase, the transient inhibition of the acetylcholine (ACh) release, starts soon after the addition of Atx and lasts for several minutes. This phase is probably independent of Atx enzymatic activity. The effect may be due to the specific binding of the toxin to presynaptic receptors. These receptors, called N-type receptors, are still unidentified. It is noteworthy that a neuronal isoform of the M-type PLA2 receptor (R180) has been identified as a high-affinity receptor for Atx in neuronal plasma membranes. It was demonstrated however that this receptor is not essential for expression of neurotoxicity by Atx. The second phase corresponds to an augmentation of neurotransmitter release. A peak is reached 10-20 minutes after exposure of the preparation to Atx and is followed by a gradual reduction. In this phase, the enzymatic activity of Atx of the mammalian is not significant. It is speculated that the increased release of neurotransmitter in this phase is induced by the interference of Atx with voltage-gated potassium channels. Measurements of ionic currents showed however that voltage-gated potassium channels are not affected by Atx. The third phase of the response of neuromuscular preparations to Atx, which corresponds to a complete and irreversible paralysis, is clearly dependent on the hydrolytic activity of the toxin. In addition to its presynaptic neurotoxicity, Atx shows an anticoagulant activity by binding with high affinity to activated coagulation factor X (F10) thus inhibiting the formation of the prothrombinase complex (FX/FV) and its activity (IC(50) is 82 nM). Surprisingly, Atx was discovered to bind intracellular proteins such as calmodulin (CaM), 14-3-3 proteins gamma (YWHAG) and epsilon (YWHAE) (by similarity with AtxC), as well as R25 (by similarity with AtxC), a mitochondrial integral membrane protein found in cerebral cortex. These findings raised a doubt about the dogma of the exclusively extracellular action of PLA2s, defended by the potential instability of these molecules in the reducing environment of the eukaryotic cytosol coupled with their possible inability to act as enzymes in this cellular compartment, due to too low concentration of calcium ions. This hypothesis was challenged efficiently by demonstrating the internalization of AtxA into a culture cells, but still remains to be directly demonstrated in vivo. PLA2 catalyzes the calcium-dependent hydrolysis of the 2-acyl groups in 3-sn-phosphoglycerides. The chain is Basic phospholipase A2 ammodytoxin B from Vipera ammodytes ammodytes (Western sand viper).